The following is a 332-amino-acid chain: Methionyl-tRNA formyltransferase (332 aa).

114 to 117 (SLLP) is a binding site for (6S)-5,6,7,8-tetrahydrofolate.

It belongs to the Fmt family.

The catalysed reaction is L-methionyl-tRNA(fMet) + (6R)-10-formyltetrahydrofolate = N-formyl-L-methionyl-tRNA(fMet) + (6S)-5,6,7,8-tetrahydrofolate + H(+). Attaches a formyl group to the free amino group of methionyl-tRNA(fMet). The formyl group appears to play a dual role in the initiator identity of N-formylmethionyl-tRNA by promoting its recognition by IF2 and preventing the misappropriation of this tRNA by the elongation apparatus. The protein is Methionyl-tRNA formyltransferase of Corynebacterium aurimucosum (strain ATCC 700975 / DSM 44827 / CIP 107346 / CN-1) (Corynebacterium nigricans).